The following is a 282-amino-acid chain: Cell division protein DivIB (282 aa).

Residues 1–59 (MLDDRSAIEHHKYSQRLTELERRSAAAQQRQQKKKPPKMHVGNKIRGIKIKRYVSNGER) lie on the Cytoplasmic side of the membrane. The segment at 19-41 (ELERRSAAAQQRQQKKKPPKMHV) is disordered. Positions 31–41 (QQKKKPPKMHV) are enriched in basic residues. Residues 60-80 (VLKLVVLFSAILLFMLYIISP) traverse the membrane as a helical segment. The Extracellular portion of the chain corresponds to 81–282 (LSKITTLHVT…YSYDYGSKDK (202 aa)). The region spanning 82–153 (SKITTLHVTG…QSLQISVKEN (72 aa)) is the POTRA domain.

It belongs to the FtsQ/DivIB family. DivIB subfamily.

The protein localises to the cell membrane. Functionally, cell division protein that may be involved in stabilizing or promoting the assembly of the division complex. This chain is Cell division protein DivIB, found in Limosilactobacillus reuteri (strain ATCC 55730 / SD2112) (Lactobacillus reuteri).